Consider the following 596-residue polypeptide: Signal peptide peptidase-like 2B (596 aa).

Residues 1–21 (MAARWAQFLLFSLLSLPQVYC) form the signal peptide. Residues 22–170 (EYGMVHVLSE…APNEPVLDYN (149 aa)) are Lumenal-facing. A PA domain is found at 53 to 147 (HDLGKASLLQ…LLSYSDMLDI (95 aa)). N-linked (GlcNAc...) asparagine glycosylation occurs at Asn-93. The helical transmembrane segment at 171–191 (MVIIFVMAVGTVAIGGYWAGS) threads the bilayer. Over 192–219 (RDVKERYMKHKRDDGAEKHEDETVDVTP) the chain is Cytoplasmic. The chain crosses the membrane as a helical span at residues 220 to 240 (IMICVFVVMCCSMLVLLYFFY). At 241-242 (DH) the chain is on the lumenal side. Residues 243-263 (LVYVIIGIFCLAASIGLYSCL) traverse the membrane as a helical segment. The Cytoplasmic portion of the chain corresponds to 264–289 (SPFVRRFPLGKCRIPDNNLPYFHKRP). Residues 290–310 (QVRILLLAVFCISVSVVWGVF) traverse the membrane as a helical segment. Topologically, residues 311-315 (RNEDQ) are lumenal. The helical transmembrane segment at 316 to 336 (WAWVLQDALGIAFCLYMLKTI) threads the bilayer. At 337 to 344 (RLPTFKGC) the chain is on the cytoplasmic side. The helical transmembrane segment at 345-365 (TLLLLVLFVYDVFFVFITPFL) threads the bilayer. Asp-355 is an active-site residue. At 366-408 (TKTGESIMVEVAAGPSDSATHEKLPMVLKVPRLNSSPLALCDR) the chain is on the lumenal side. A helical membrane pass occupies residues 409-429 (PFSLLGFGDILVPGLLVAYCH). Residue Asp-417 is part of the active site. Topologically, residues 430–441 (RFDIQVQSSRVY) are cytoplasmic. Residues 442–462 (FVACTIAYGIGLLVTFVALAL) form a helical membrane-spanning segment. Residues 463-466 (MQMG) lie on the Lumenal side of the membrane. The helical transmembrane segment at 467–487 (QPALLYLVPCTLITSFSVALW) threads the bilayer. Positions 468-470 (PAL) match the PAL motif. At 488-596 (RKELAMFWTG…SLNLEQKQLE (109 aa)) the chain is on the cytoplasmic side. The interval 543-596 (KELHSPTLAAEEPADNDTKTEQSEVSIAQSEEAAGHNKDDLESKSLNLEQKQLE) is disordered. Positions 575–585 (AAGHNKDDLES) are enriched in basic and acidic residues. Polar residues predominate over residues 586-596 (KSLNLEQKQLE).

This sequence belongs to the peptidase A22B family.

The protein localises to the cell membrane. Its subcellular location is the golgi apparatus membrane. The protein resides in the lysosome membrane. It localises to the endosome membrane. It is found in the membrane. In terms of biological role, intramembrane-cleaving aspartic protease (I-CLiP) that cleaves type II membrane signal peptides in the hydrophobic plane of the membrane. In Gallus gallus (Chicken), this protein is Signal peptide peptidase-like 2B.